A 70-amino-acid chain; its full sequence is U2-agatoxin-Ao1m (70 aa).

The signal sequence occupies residues 1-20; that stretch reads MRAIISLFLISAMVFSMIQA. Residues 21–34 constitute a propeptide that is removed on maturation; the sequence is VPEEXGLQLSEDER. Disulfide bonds link Cys-37-Cys-53, Cys-44-Cys-58, and Cys-52-Cys-68. Position 69 is a leucine amide (Leu-69).

It belongs to the neurotoxin 01 (U2-agtx) family. As to expression, expressed by the venom gland.

It localises to the secreted. Its function is as follows. Insect active toxin causing rapid but reversible paralysis in crickets. No activity shown in mammals. Does not show effect on mammalian voltage-gated calcium channels. The sequence is that of U2-agatoxin-Ao1m from Agelena orientalis (Funnel-web spider).